The following is a 302-amino-acid chain: MNENSRLHTHSNIRNTFFSEIGIGISGNSFLLLFHIIKFFRGHRPRLTDLPIGLLSLIHLLMLLVAAVIATDIFISWRGWNDIICKFLVYLYRSLRGLSLCTTSMLSVLQAIILSPRSYCLAKFKRKSSHNISCAIIFLSVLYMSISSHLLISITATPNLTMNDFLYVSQSCSLLPLSYLMQSIYSTLLVLREVFLIGLMVLSTSYMVALLYMHRKQAQNLQGTSLSLKASAEQRATQTILMLMTFFVLMSIFDSIVSCSRTMFLDDPTSYSIHIFVMHIYATVSPFVFISTEKHIVNILRG.

The Extracellular portion of the chain corresponds to 1–16; it reads MNENSRLHTHSNIRNT. A helical membrane pass occupies residues 17-37; it reads FFSEIGIGISGNSFLLLFHII. Over 38-49 the chain is Cytoplasmic; that stretch reads KFFRGHRPRLTD. A helical membrane pass occupies residues 50-70; that stretch reads LPIGLLSLIHLLMLLVAAVIA. Over 71 to 91 the chain is Extracellular; the sequence is TDIFISWRGWNDIICKFLVYL. Cysteines 85 and 172 form a disulfide. Residues 92 to 114 form a helical membrane-spanning segment; it reads YRSLRGLSLCTTSMLSVLQAIIL. At 115-131 the chain is on the cytoplasmic side; sequence SPRSYCLAKFKRKSSHN. The helical transmembrane segment at 132-152 threads the bilayer; the sequence is ISCAIIFLSVLYMSISSHLLI. Residues 153 to 193 lie on the Extracellular side of the membrane; the sequence is SITATPNLTMNDFLYVSQSCSLLPLSYLMQSIYSTLLVLRE. An N-linked (GlcNAc...) asparagine glycan is attached at asparagine 159. The chain crosses the membrane as a helical span at residues 194 to 214; sequence VFLIGLMVLSTSYMVALLYMH. Over 215–238 the chain is Cytoplasmic; sequence RKQAQNLQGTSLSLKASAEQRATQ. The helical transmembrane segment at 239–259 threads the bilayer; it reads TILMLMTFFVLMSIFDSIVSC. At 260–269 the chain is on the extracellular side; sequence SRTMFLDDPT. A helical transmembrane segment spans residues 270-290; it reads SYSIHIFVMHIYATVSPFVFI. At 291–302 the chain is on the cytoplasmic side; the sequence is STEKHIVNILRG.

Belongs to the G-protein coupled receptor 1 family.

Its subcellular location is the cell membrane. In terms of biological role, putative pheromone receptor implicated in the regulation of social and reproductive behavior. This chain is Vomeronasal type-1 receptor 48 (Vmn1r48), found in Mus musculus (Mouse).